Reading from the N-terminus, the 156-residue chain is Small ribosomal subunit protein uS7 (156 aa).

The protein belongs to the universal ribosomal protein uS7 family. Part of the 30S ribosomal subunit. Contacts proteins S9 and S11.

One of the primary rRNA binding proteins, it binds directly to 16S rRNA where it nucleates assembly of the head domain of the 30S subunit. Is located at the subunit interface close to the decoding center, probably blocks exit of the E-site tRNA. The protein is Small ribosomal subunit protein uS7 of Actinobacillus succinogenes (strain ATCC 55618 / DSM 22257 / CCUG 43843 / 130Z).